The primary structure comprises 310 residues: MNAIKETRFELPGQTGFYKGKVRDVYYVADKLVVVASDRISAFDVVLPRAIPFKGQVLNQIAAKMLAQTADVVPNWILSVPDPSVSIGIKCEPFKVEMVIRGYLAGHAAREYKAGKRTLCGVALPEELKENDKLPAPIITPTTKADEGHDEDISREDLLARGIVSEADYIQLEKYTQALFQRGTELAEKQGLILVDTKYEFGKVGDKIYLIDEIHTPDSSRYFYIDGYAERQAKGEAQKQLSKEFVRQWLIENGFQGKEGQNVPVMTDEIVSSISERYIELYEKVIGESFKKPEESNPEERILKNILKAL.

Belongs to the SAICAR synthetase family.

It catalyses the reaction 5-amino-1-(5-phospho-D-ribosyl)imidazole-4-carboxylate + L-aspartate + ATP = (2S)-2-[5-amino-1-(5-phospho-beta-D-ribosyl)imidazole-4-carboxamido]succinate + ADP + phosphate + 2 H(+). The protein operates within purine metabolism; IMP biosynthesis via de novo pathway; 5-amino-1-(5-phospho-D-ribosyl)imidazole-4-carboxamide from 5-amino-1-(5-phospho-D-ribosyl)imidazole-4-carboxylate: step 1/2. The polypeptide is Phosphoribosylaminoimidazole-succinocarboxamide synthase (Cytophaga hutchinsonii (strain ATCC 33406 / DSM 1761 / CIP 103989 / NBRC 15051 / NCIMB 9469 / D465)).